We begin with the raw amino-acid sequence, 155 residues long: Ribosome maturation factor RimP (155 aa).

This sequence belongs to the RimP family.

It localises to the cytoplasm. Required for maturation of 30S ribosomal subunits. This chain is Ribosome maturation factor RimP, found in Prochlorococcus marinus (strain MIT 9211).